The following is a 391-amino-acid chain: Homocysteine-responsive endoplasmic reticulum-resident ubiquitin-like domain member 1 protein (391 aa).

Met1 carries the N-acetylmethionine modification. Over 1–263 (MESETEPEPV…VEEDDEINRD (263 aa)) the chain is Cytoplasmic. The 63-residue stretch at 10-72 (VTLLVKSPNQ…LLDHQCLRDL (63 aa)) folds into the Ubiquitin-like domain. Residues 100 to 126 (KVAESTEEPAGSNRGQYPEDSSSDGLR) form a disordered region. Polar residues predominate over residues 112-124 (NRGQYPEDSSSDG). The interval 115–200 (QYPEDSSSDG…ASGAFVPPPS (86 aa)) is interaction with UBQLN1. The residue at position 135 (Ser135) is a Phosphoserine. Residues 170-190 (LSWFQQIYARQYYMQYLAATA) form an interaction with SYVN1 region. The helical transmembrane segment at 264–284 (WLDWTYSAATFSVFLSILYFY) threads the bilayer. The Lumenal portion of the chain corresponds to 285-289 (SSLSR). The chain crosses the membrane as a helical span at residues 290–310 (FLMVMGATVVMYLHHVGWFPF). The Cytoplasmic portion of the chain corresponds to 311 to 391 (RPRPVQNFPN…LPEGPPAIAN (81 aa)). The disordered stretch occupies residues 318-359 (FPNDGPPPDVVNQDPNNNLQEGTDPETEDPNHLPPDRDVLDG). The segment covering 346–357 (DPNHLPPDRDVL) has biased composition (basic and acidic residues).

As to quaternary structure, interacts with PSEN1 and PSEN2. Interacts with UBXN6. Interacts with UBQLN1, UBQLN2 and UBQLN4. Component of the HRD1 complex, which comprises at least SYNV1/HRD1, FAM8A1, HERPUD1/HERP, OS9, SEL1L and UBE2J1. FAM8A1 binding to SYNV1 may promote recruitment of HERPUD1 to the HRD1 complex. As to expression, widely expressed; in the brain, expression seems to be restricted to neurons and vascular smooth muscle cells. Present in activated microglia in senile plaques in the brain of patients with Alzheimer disease.

Its subcellular location is the endoplasmic reticulum membrane. Its function is as follows. Component of the endoplasmic reticulum quality control (ERQC) system also called ER-associated degradation (ERAD) involved in ubiquitin-dependent degradation of misfolded endoplasmic reticulum proteins. Could enhance presenilin-mediated amyloid-beta protein 40 generation. Binds to ubiquilins and this interaction is required for efficient degradation of CD3D via the ERAD pathway. This is Homocysteine-responsive endoplasmic reticulum-resident ubiquitin-like domain member 1 protein (HERPUD1) from Homo sapiens (Human).